The primary structure comprises 221 residues: Carbonic anhydrase (221 aa).

4 residues coordinate Zn(2+): Cys38, Asp40, His99, and Cys102.

Belongs to the beta-class carbonic anhydrase family. Zn(2+) is required as a cofactor.

The catalysed reaction is hydrogencarbonate + H(+) = CO2 + H2O. This is Carbonic anhydrase (cynT) from Helicobacter pylori (strain ATCC 700392 / 26695) (Campylobacter pylori).